The sequence spans 294 residues: Acetaldehyde dehydrogenase (294 aa).

NAD(+) is bound at residue 11 to 14; that stretch reads SGNI. C126 acts as the Acyl-thioester intermediate in catalysis. NAD(+) contacts are provided by residues 157–165 and N269; that span reads SAGPGTRAN.

It belongs to the acetaldehyde dehydrogenase family.

It catalyses the reaction acetaldehyde + NAD(+) + CoA = acetyl-CoA + NADH + H(+). This chain is Acetaldehyde dehydrogenase (pheF), found in Geobacillus stearothermophilus (Bacillus stearothermophilus).